A 94-amino-acid chain; its full sequence is Selenoprotein K (94 aa).

A helical transmembrane segment spans residues 20 to 42; sequence LSFITDFFWGIAEFVVLFFRTLL. Residues 48 to 94 are disordered; it reads KRRGYGGSSDSRYDDGRGPPGNPPRRMGRINHLRGPNPPPMAGGUGR. U92 is a non-standard amino acid (selenocysteine).

It belongs to the selenoprotein K family. As to quaternary structure, interacts with DERL1, DERL2, DERL3 and SELENOS. The SELENOK-SELENOS complex interacts with VCP. Interacts with ZDHHC6. In terms of processing, cleaved by CAPN2/m-calpain in resting macrophages but not in activated macrophages. Macrophage activation up-regulates expression of the calpain inhibitor CAST/calpastatin, resulting in inhibition of CAPN2 activity. Post-translationally, truncated SELENOK proteins produced by failed UGA/Sec decoding are ubiquitinated by the CRL2(KLHDC2) complex, which recognizes the diglycine (Gly-Gly) at the C-terminus of truncated SELENOK proteins.

It localises to the endoplasmic reticulum membrane. The protein resides in the cell membrane. Functionally, required for Ca(2+) flux in immune cells and plays a role in T-cell proliferation and in T-cell and neutrophil migration. Involved in endoplasmic reticulum-associated degradation (ERAD) of soluble glycosylated proteins. Required for palmitoylation and cell surface expression of CD36 and involved in macrophage uptake of low-density lipoprotein and in foam cell formation. Together with ZDHHC6, required for palmitoylation of ITPR1 in immune cells, leading to regulate ITPR1 stability and function. Plays a role in protection of cells from ER stress-induced apoptosis. Protects cells from oxidative stress when overexpressed in cardiomyocytes. This chain is Selenoprotein K, found in Sus scrofa (Pig).